The sequence spans 176 residues: Large ribosomal subunit protein eL20 (176 aa).

Lys-11 participates in a covalent cross-link: Glycyl lysine isopeptide (Lys-Gly) (interchain with G-Cter in SUMO2). Position 63 is a phosphotyrosine (Tyr-63). Ser-71 is modified (phosphoserine). Lys-76 carries the N6-succinyllysine modification. Ser-123 bears the Phosphoserine mark. Glycyl lysine isopeptide (Lys-Gly) (interchain with G-Cter in SUMO2) cross-links involve residues Lys-128 and Lys-170.

This sequence belongs to the eukaryotic ribosomal protein eL20 family. In terms of assembly, component of the large ribosomal subunit. Binds IPO9 with high affinity.

Its subcellular location is the cytoplasm. Component of the large ribosomal subunit. The ribosome is a large ribonucleoprotein complex responsible for the synthesis of proteins in the cell. The chain is Large ribosomal subunit protein eL20 (Rpl18a) from Mus musculus (Mouse).